A 247-amino-acid chain; its full sequence is Granulin (247 aa).

The protein belongs to the polyhedrin family.

Functionally, component of the virus occlusion bodies, which are large proteinaceous structures, that protect the virus from the outside environment for extended periods until they are ingested by insect larvae. The protein is Granulin of Pieris brassicae granulosis virus (PbGV).